The primary structure comprises 346 residues: Cytosolic sulfotransferase 17 (346 aa).

Residue 89–94 (KTGTTW) participates in 3'-phosphoadenylyl sulfate binding. H151 serves as the catalytic Proton acceptor. 3'-phosphoadenylyl sulfate-binding positions include R173, S181, Y239, and 309 to 311 (RKG).

This sequence belongs to the sulfotransferase 1 family. Highly expressed in roots, stems and mature leaves. Low expression in young leaves and flowers. Barely detected in siliques.

The protein localises to the cytoplasm. It carries out the reaction an aliphatic (Z)-desulfo-glucosinolate + 3'-phosphoadenylyl sulfate = a (Z)-omega-(methylsulfanyl)-N-sulfo-alkylhydroximate S-glucoside + adenosine 3',5'-bisphosphate + H(+). Inhibited by phosphoadenosine 5'-phosphate (PAP). Sulfotransferase that utilizes 3'-phospho-5'-adenylyl sulfate (PAPS) as sulfonate donor to catalyze the sulfate conjugation of desulfo-glucosinolates (dsGSs), the final step in the biosynthesis of the glucosinolate core structure. Substrate preference is desulfo-benzyl glucosinolate &gt; desulfo-6-methylthiohexyl glucosinolate. Increased specific activity with increasing chain length of desulfo-glucosinolate derived from methionine. Preferred substrate is desulfo-8-methylthiooctyl glucosinolate. This Arabidopsis thaliana (Mouse-ear cress) protein is Cytosolic sulfotransferase 17 (SOT17).